The chain runs to 540 residues: DNA topoisomerase 1 (540 aa).

One can recognise a Toprim domain in the interval 1–110; that stretch reads MELFIVESPT…NIKRAVFYEI (110 aa). Positions 7 and 79 each coordinate Mg(2+). A Topo IA-type catalytic domain is found at 126-536; it reads NMNLVYAQFA…FMEKIFGKEL (411 aa). The segment at 161 to 166 is interaction with DNA; it reads SAGRVQ. The active-site O-(5'-phospho-DNA)-tyrosine intermediate is Tyr-281.

Belongs to the type IA topoisomerase family. Monomer. It depends on Mg(2+) as a cofactor.

It carries out the reaction ATP-independent breakage of single-stranded DNA, followed by passage and rejoining.. Releases the supercoiling and torsional tension of DNA, which is introduced during the DNA replication and transcription, by transiently cleaving and rejoining one strand of the DNA duplex. Introduces a single-strand break via transesterification at a target site in duplex DNA. The scissile phosphodiester is attacked by the catalytic tyrosine of the enzyme, resulting in the formation of a DNA-(5'-phosphotyrosyl)-enzyme intermediate and the expulsion of a 3'-OH DNA strand. The free DNA strand then undergoes passage around the unbroken strand, thus removing DNA supercoils. Finally, in the religation step, the DNA 3'-OH attacks the covalent intermediate to expel the active-site tyrosine and restore the DNA phosphodiester backbone. The polypeptide is DNA topoisomerase 1 (Aquifex aeolicus (strain VF5)).